A 467-amino-acid polypeptide reads, in one-letter code: Megakaryocyte-associated tyrosine-protein kinase (467 aa).

The tract at residues 1–20 (MPTQRWAPGTQCMTKCENSR) is disordered. The SH3 domain occupies 7 to 69 (APGTQCMTKC…AAAALRQREA (63 aa)). The 90-residue stretch at 81-170 (WFHGKISGQE…AICTKLVKPK (90 aa)) folds into the SH2 domain. The Protein kinase domain maps to 194 to 443 (LTLGAQIGEG…IVEKLGRELR (250 aa)). ATP contacts are provided by residues 200 to 208 (IGEGEFGAV) and K221. The active-site Proton acceptor is D311. The interval 445-467 (VGVAAPAGGQEAEGSAPTRSQDP) is disordered.

Belongs to the protein kinase superfamily. Tyr protein kinase family. CSK subfamily. As to quaternary structure, interacts with KIT. In terms of tissue distribution, enriched in lymphoid tissues.

It localises to the cytoplasm. The protein localises to the membrane. It catalyses the reaction L-tyrosyl-[protein] + ATP = O-phospho-L-tyrosyl-[protein] + ADP + H(+). In terms of biological role, could play a significant role in the signal transduction of hematopoietic cells. May regulate tyrosine kinase activity of SRC-family members in brain. The sequence is that of Megakaryocyte-associated tyrosine-protein kinase (Matk) from Rattus norvegicus (Rat).